Reading from the N-terminus, the 568-residue chain is Urease subunit alpha (568 aa).

Residues 133–568 (GGVDTHIHFI…LPLAQKYFLF (436 aa)) form the Urease domain. H138, H140, and K221 together coordinate Ni(2+). K221 bears the N6-carboxylysine mark. H223 lines the substrate pocket. Ni(2+) contacts are provided by H250 and H276. The active-site Proton donor is H324. D364 provides a ligand contact to Ni(2+).

It belongs to the metallo-dependent hydrolases superfamily. Urease alpha subunit family. Heterohexamer of 3 UreC (alpha) and 3 UreAB (gamma/beta) subunits. Ni cation serves as cofactor. Carboxylation allows a single lysine to coordinate two nickel ions.

Its subcellular location is the cytoplasm. The enzyme catalyses urea + 2 H2O + H(+) = hydrogencarbonate + 2 NH4(+). The protein operates within nitrogen metabolism; urea degradation; CO(2) and NH(3) from urea (urease route): step 1/1. The sequence is that of Urease subunit alpha from Deinococcus radiodurans (strain ATCC 13939 / DSM 20539 / JCM 16871 / CCUG 27074 / LMG 4051 / NBRC 15346 / NCIMB 9279 / VKM B-1422 / R1).